The primary structure comprises 67 residues: DNA-directed RNA polymerase subunit omega (67 aa).

It belongs to the RNA polymerase subunit omega family. RNAP is composed of a core of 2 alpha, a beta and a beta' subunit. The core is associated with a delta subunit, and at least one of epsilon or omega. When a sigma factor is associated with the core the holoenzyme is formed, which can initiate transcription.

The enzyme catalyses RNA(n) + a ribonucleoside 5'-triphosphate = RNA(n+1) + diphosphate. Its function is as follows. Promotes RNA polymerase assembly. Latches the N- and C-terminal regions of the beta' subunit thereby facilitating its interaction with the beta and alpha subunits. In vitro reconstitution experiments this subunit is dispensible. The polypeptide is DNA-directed RNA polymerase subunit omega (rpoZ) (Bacillus subtilis (strain 168)).